The primary structure comprises 229 residues: Clathrin light chain B (229 aa).

Over residues 1–17 the composition is skewed to low complexity; sequence MADDFGFFSSSESGAPE. The segment at 1–82 is disordered; that stretch reads MADDFGFFSS…NGDVFQEANG (82 aa). Ser11 and Ser13 each carry phosphoserine. Residues 58 to 73 are compositionally biased toward polar residues; sequence GPTSGAGSEDMGTTVN. Positions 93-155 are involved in binding clathrin heavy chain; the sequence is ADRLTQEPES…QVEKNKINNR (63 aa). Position 187 is a phosphothreonine (Thr187). Cys199 and Cys209 are joined by a disulfide. The residue at position 204 (Lys204) is an N6-acetyllysine. Ser217 is subject to Phosphoserine.

It belongs to the clathrin light chain family. In terms of assembly, clathrin coats are formed from molecules containing 3 heavy chains and 3 light chains. Interacts (via N-terminus) with HIP1. Interacts with HIP1R.

The protein localises to the cytoplasmic vesicle membrane. It is found in the membrane. Its subcellular location is the coated pit. Clathrin is the major protein of the polyhedral coat of coated pits and vesicles. This Homo sapiens (Human) protein is Clathrin light chain B (CLTB).